Consider the following 367-residue polypeptide: Heme A synthase (367 aa).

Helical transmembrane passes span 26–46 (IRGW…VGGA), 111–131 (LLAR…WVTG), 139–159 (LPLL…WWMV), 174–194 (LATH…IYRG), and 212–232 (AGAI…VAGL). H274 is a heme binding site. 3 helical membrane passes run 276–296 (LGAY…LRAA), 305–325 (SVLL…TLLL), and 327–347 (VPIG…GFAI). H335 is a binding site for heme.

This sequence belongs to the COX15/CtaA family. Type 2 subfamily. As to quaternary structure, interacts with CtaB. Heme b is required as a cofactor.

The protein localises to the cell membrane. It carries out the reaction Fe(II)-heme o + 2 A + H2O = Fe(II)-heme a + 2 AH2. Its pathway is porphyrin-containing compound metabolism; heme A biosynthesis; heme A from heme O: step 1/1. Its function is as follows. Catalyzes the conversion of heme O to heme A by two successive hydroxylations of the methyl group at C8. The first hydroxylation forms heme I, the second hydroxylation results in an unstable dihydroxymethyl group, which spontaneously dehydrates, resulting in the formyl group of heme A. The protein is Heme A synthase of Rhizobium meliloti (strain 1021) (Ensifer meliloti).